Consider the following 815-residue polypeptide: (E)-gamma-bisabolene synthase (815 aa).

Residues Asp-561, Asp-565, Asp-709, and Glu-717 each contribute to the Mg(2+) site. A DDXXD motif motif is present at residues 561–565; the sequence is DDMYD.

Belongs to the terpene synthase family. Tpsd subfamily. It depends on Mg(2+) as a cofactor. Requires Mn(2+) as cofactor.

It is found in the cytoplasm. The enzyme catalyses (2E,6E)-farnesyl diphosphate = (E)-gamma-bisabolene + diphosphate. It participates in terpene metabolism; oleoresin biosynthesis. Its function is as follows. Involved in defensive oleoresin formation in conifers in response to insect attack or other injury. Involved in sesquiterpene (C15) olefins biosynthesis. Produces mainly (E)-gamma-bisabolene when used with farnesyl diphosphate as substrate. No activity with geranyl diphosphate or geranylgeranyl diphosphate. In Pseudotsuga menziesii (Douglas-fir), this protein is (E)-gamma-bisabolene synthase (TPS3).